Consider the following 234-residue polypeptide: MAKLSKRMKLVRDSVDASKEYEINEAVVLLQKLATAKFTESIDVSVNLGVDPRRSDQNVRGATVLPHGTGRTVRVAVFTQGANAEAAKAAGADIVGMDDLAAQVKAGELNFDVVIASPDAMRVVGQLGQILGPRGLMPNPKVGTVTPDVATAVKNAKAGQIRYRNDKNGIIHSTIGKVTFTPVQIRENLEALLAALIKGKPSGAKGQFLKRISLSTTMGAGLKVDTSSVKATVA.

This sequence belongs to the universal ribosomal protein uL1 family. As to quaternary structure, part of the 50S ribosomal subunit.

Functionally, binds directly to 23S rRNA. The L1 stalk is quite mobile in the ribosome, and is involved in E site tRNA release. Protein L1 is also a translational repressor protein, it controls the translation of the L11 operon by binding to its mRNA. The chain is Large ribosomal subunit protein uL1 from Psychromonas ingrahamii (strain DSM 17664 / CCUG 51855 / 37).